The sequence spans 102 residues: UPF0251 protein ASA_1331 (102 aa).

This sequence belongs to the UPF0251 family.

This is UPF0251 protein ASA_1331 from Aeromonas salmonicida (strain A449).